We begin with the raw amino-acid sequence, 208 residues long: UPF0323 lipoprotein HH_0014 (208 aa).

The N-terminal stretch at 1–26 (MKHIHKIKNYAMVGGLGVMAVFALNA) is a signal peptide. A lipid anchor (N-palmitoyl cysteine) is attached at C27. Residue C27 is the site of S-diacylglycerol cysteine attachment. The disordered stretch occupies residues 148–208 (ANSQRNYKSP…TNRNTGSMGS (61 aa)). 2 stretches are compositionally biased toward low complexity: residues 169–185 (SAKT…SGKS) and 193–208 (SSQS…SMGS).

The protein belongs to the UPF0323 family.

It is found in the cell membrane. The sequence is that of UPF0323 lipoprotein HH_0014 from Helicobacter hepaticus (strain ATCC 51449 / 3B1).